Consider the following 238-residue polypeptide: MKNIQTLFQTLNITPQNLTLYKQALTHSSYSNEQNPPQEDNERLEFLGDAIVGLLMADYLYSQSKEDEGIMTKKRAQAVCERSLTIYAHNIELQNYLLLGKGEKNKDFNAKSIIADTFEALFGAIYLDLGYLTAKKVFHNIVLPHLAKTIYIIDFKTQLQEIVQSEKKTIQYKIVQEQGPAHSKNFVAEVYLEKNLLGTGEGSTKKAAEQKAAQQALSKVAKPKDLLNNKGGKEKELQ.

The region spanning 4–130 (IQTLFQTLNI…LFGAIYLDLG (127 aa)) is the RNase III domain. Glu45 serves as a coordination point for Mg(2+). Residue Asp49 is part of the active site. Positions 116 and 119 each coordinate Mg(2+). Residue Glu119 is part of the active site. Positions 154–222 (DFKTQLQEIV…AQQALSKVAK (69 aa)) constitute a DRBM domain. The tract at residues 215-238 (QALSKVAKPKDLLNNKGGKEKELQ) is disordered. The segment covering 222-238 (KPKDLLNNKGGKEKELQ) has biased composition (basic and acidic residues).

It belongs to the ribonuclease III family. Homodimer. The cofactor is Mg(2+).

It is found in the cytoplasm. The enzyme catalyses Endonucleolytic cleavage to 5'-phosphomonoester.. Digests double-stranded RNA. Involved in the processing of primary rRNA transcript to yield the immediate precursors to the large and small rRNAs (23S and 16S). Processes some mRNAs, and tRNAs when they are encoded in the rRNA operon. Processes pre-crRNA and tracrRNA of type II CRISPR loci if present in the organism. The polypeptide is Ribonuclease 3 (Onion yellows phytoplasma (strain OY-M)).